A 1807-amino-acid polypeptide reads, in one-letter code: Atrochrysone carboxylic acid synthase Agnpks1 (1807 aa).

Positions 41-173 (LFRELHNHSK…ITGAQVIRQA (133 aa)) are N-terminal acylcarrier protein transacylase domain (SAT). Residues 411 to 845 (QSKIAIVGMS…GGNTTILLEE (435 aa)) form the Ketosynthase family 3 (KS3) domain. Residues Cys584, His720, and His763 each act as for beta-ketoacyl synthase activity in the active site. Residues 946-1265 (FTFTGQGASY…SLAALHCAGV (320 aa)) form a malonyl-CoA:ACP transacylase (MAT) domain region. The product template (PT) domain stretch occupies residues 1334–1653 (TSTVHQIIQE…RILLSRFFSA (320 aa)). The tract at residues 1338–1473 (HQIIQESIDG…ATLIYGDPSE (136 aa)) is N-terminal hotdog fold. Positions 1338 to 1648 (HQIIQESIDG…FRRYPRILLS (311 aa)) constitute a PKS/mFAS DH domain. His1370 (proton acceptor; for dehydratase activity) is an active-site residue. A C-terminal hotdog fold region spans residues 1500–1648 (VANRFNHQMA…FRRYPRILLS (149 aa)). Asp1559 (proton donor; for dehydratase activity) is an active-site residue. A Carrier domain is found at 1732–1806 (DTTTAKAIQI…DLRSWLEEYY (75 aa)). O-(pantetheine 4'-phosphoryl)serine is present on Ser1766.

The catalysed reaction is holo-[ACP] + 8 malonyl-CoA + 8 H(+) = atrochrysone carboxyl-[ACP] + 8 CO2 + 8 CoA + 2 H2O. The protein operates within secondary metabolite biosynthesis. Its function is as follows. Non-reducing polyketide synthase; part of the gene cluster that mediates the biosynthesis of agnestins, dihydroxy-xanthone metabolites. The pathway begins with the assembly and cyclization of atrochrysone thioester by the non-reducing polyketide synthase Agnpks1. The atrochrysone carboxyl ACP thioesterase AgnL7 then breaks the thioester bond and releases the atrochrysone carboxylic acid as the first enzyme-free intermediate. The decarboxylase AgnL1 then catalyzes the concerted decarboxylation-elimination required to convert atochrysone carboxylic acid into emodin anthrone, which is further oxidized to emodin by the anthrone oxygenase AgnL2. Emodin then undergoes reduction catalyzed by the oxidoreductase AgnL4 to yield the dihydroquinone tautomer which is the substrate for reduction by the short chain dehydrogenase AgnL6 reduction to produce hydroxyketone, followed by AgnL8 dehydration and likely spontaneous autoxidation to chrysophanol. Baeyer-Villiger oxidation by the oxidase AgnL3 leads to monodictyphenone via cleavage of the C-10/C-10a bond of chrysophanol. Alternative cleavage at the C-4a/C-10 bond of chrysophanol also leads to the formation some cephalone F. Further conversion to agnestins A and B, requires reduction to dihydro-monodictyphenone, oxidation to agnestin C probably via an epoxide, and rearrangement to either agnestin A or agnestin B directly, although agnestin A or agnestin B can also interconvert. Within the cluster, AgnR1 is the only unassigned oxidoreductase present which could be involved in this conversion. However, AgnR1 seems not to be involved in this step, and thus genes involved in the proposed oxidation/reduction may be located elsewhere on the genome. Further agnestin A derivatives are probably formed by spontaneous decarboxylations, dehydrations and methanolysis reactions. The sequence is that of Atrochrysone carboxylic acid synthase Agnpks1 from Paecilomyces divaricatus (Penicillium divaricatum).